Here is a 355-residue protein sequence, read N- to C-terminus: Endonuclease III homolog (355 aa).

A Nuclear localization signal motif is present at residues 44-50; sequence PKKFRFQ. The region spanning 122–149 is the HhH domain; it reads FQGDIPDTVEDLMTLPGVGPKMGYLCMS. Lysine 142 serves as the catalytic Nucleophile; for N-glycosylase activity. Positions 210, 217, 220, and 228 each coordinate [4Fe-4S] cluster. A Nuclear localization signal motif is present at residues 252 to 255; that stretch reads KKRP. Residues 303 to 355 form a disordered region; it reads KEPAADIDVDQKPPVAFHSTTKETRSLRRSKRVAKKSSQYFSQQSLQDIEDLV. Residues 338–349 show a composition bias toward polar residues; it reads KSSQYFSQQSLQ.

The protein belongs to the Nth/MutY family. [4Fe-4S] cluster is required as a cofactor.

The protein localises to the nucleus. It is found in the mitochondrion. It catalyses the reaction 2'-deoxyribonucleotide-(2'-deoxyribose 5'-phosphate)-2'-deoxyribonucleotide-DNA = a 3'-end 2'-deoxyribonucleotide-(2,3-dehydro-2,3-deoxyribose 5'-phosphate)-DNA + a 5'-end 5'-phospho-2'-deoxyribonucleoside-DNA + H(+). Its function is as follows. Bifunctional DNA N-glycosylase with associated apurinic/apyrimidinic (AP) lyase function that catalyzes the first step in base excision repair (BER), the primary repair pathway for the repair of oxidative DNA damage. The DNA N-glycosylase activity releases the damaged DNA base from DNA by cleaving the N-glycosidic bond, leaving an AP site. The AP-lyase activity cleaves the phosphodiester bond 3' to the AP site by a beta-elimination. Primarily recognizes and repairs oxidative base damage of pyrimidines. Also has 8-oxo-7,8-dihydroguanine (8-oxoG) DNA glycosylase activity. Also involved in the repair of 7-methylguanine lesions, although it cannot directly repair alkylated DNA bases. Probably does so via excision of methylformamidopyrimidine (mFapy) lesions, a spontaneous processing product of 7-methylguanine. This is Endonuclease III homolog (nth1) from Schizosaccharomyces pombe (strain 972 / ATCC 24843) (Fission yeast).